The following is a 55-amino-acid chain: Large ribosomal subunit protein bL33 (55 aa).

Belongs to the bacterial ribosomal protein bL33 family.

The polypeptide is Large ribosomal subunit protein bL33 (Allorhizobium ampelinum (strain ATCC BAA-846 / DSM 112012 / S4) (Agrobacterium vitis (strain S4))).